The primary structure comprises 185 residues: Ribosome-recycling factor (185 aa).

Residues 136 to 159 form a disordered region; it reads NEQLKSQQKDGKMSEDELKRSQDE.

Belongs to the RRF family.

The protein localises to the cytoplasm. Its function is as follows. Responsible for the release of ribosomes from messenger RNA at the termination of protein biosynthesis. May increase the efficiency of translation by recycling ribosomes from one round of translation to another. This Pelotomaculum thermopropionicum (strain DSM 13744 / JCM 10971 / SI) protein is Ribosome-recycling factor.